The primary structure comprises 185 residues: Ribosome-recycling factor (185 aa).

Residues 135-159 form a disordered region; it reads ANDKLKASEKNKEASEDEVKRAQEK.

It belongs to the RRF family.

It localises to the cytoplasm. Its function is as follows. Responsible for the release of ribosomes from messenger RNA at the termination of protein biosynthesis. May increase the efficiency of translation by recycling ribosomes from one round of translation to another. This Moorella thermoacetica (strain ATCC 39073 / JCM 9320) protein is Ribosome-recycling factor.